Consider the following 75-residue polypeptide: Small ribosomal subunit protein bS18 (75 aa).

This sequence belongs to the bacterial ribosomal protein bS18 family. Part of the 30S ribosomal subunit. Forms a tight heterodimer with protein bS6.

In terms of biological role, binds as a heterodimer with protein bS6 to the central domain of the 16S rRNA, where it helps stabilize the platform of the 30S subunit. The protein is Small ribosomal subunit protein bS18 of Buchnera aphidicola subsp. Schizaphis graminum (strain Sg).